A 290-amino-acid polypeptide reads, in one-letter code: Nucleotide-binding protein XfasM23_0667 (290 aa).

Residue 13 to 20 (GLSGSGKS) participates in ATP binding. Residue 65-68 (DIRS) coordinates GTP.

The protein belongs to the RapZ-like family.

Functionally, displays ATPase and GTPase activities. This chain is Nucleotide-binding protein XfasM23_0667, found in Xylella fastidiosa (strain M23).